The following is a 418-amino-acid chain: L-methionine/branched-chain amino acid exporter YjeH (418 aa).

Residues 1 to 15 (MSGLKQELGLAQGIG) are Periplasmic-facing. Residues 16–36 (LLSTSLLGTGVFAVPALAALV) form a helical membrane-spanning segment. Over 37-41 (AGNNS) the chain is Cytoplasmic. The chain crosses the membrane as a helical span at residues 42–62 (LWAWPVLIILVFPIAIVFAIL). Topologically, residues 63–89 (GRHYPSAGGVAHFVGMAFGSRLERVTG) are periplasmic. The helical transmembrane segment at 90–110 (WLFLSVIPVGLPAALQIAAGF) threads the bilayer. Residues 111-113 (GQA) lie on the Cytoplasmic side of the membrane. A helical transmembrane segment spans residues 114-134 (MFGWHSWQLLLAELGTLALVW). Residues 135-147 (YIGTRGASSSANL) lie on the Periplasmic side of the membrane. A helical transmembrane segment spans residues 148–168 (QTVIAGLIVALIVAIWWAGDI). The Cytoplasmic portion of the chain corresponds to 169–182 (KPANIPFPAPGNIE). The chain crosses the membrane as a helical span at residues 183–203 (LTGLFAALSVMFWCFVGLEAF). The Periplasmic segment spans residues 204-219 (AHLASEFKNPERDFPR). A helical membrane pass occupies residues 220 to 240 (ALMIGLLLAGLVYWGCTVVVL). The Cytoplasmic portion of the chain corresponds to 241-257 (HFDAYGEKMAAAASLPK). Residues 258–278 (IVVQLFGVGALWIACVIGYLA) form a helical membrane-spanning segment. At 279–317 (CFASLNIYIQSFARLVWSQAQHNPDHYLARLSSRHIPNN) the chain is on the periplasmic side. A helical membrane pass occupies residues 318 to 338 (ALNAVLGCCVVSTLVIHALEI). The Cytoplasmic portion of the chain corresponds to 339-341 (NLD). A helical membrane pass occupies residues 342–362 (ALIIYANGIFIMIYLLCMLAG). Residues 363–378 (CKLLQGRYRLLAVVGG) lie on the Periplasmic side of the membrane. Residues 379–399 (LLCVLLLAMVGWKSLYALIML) form a helical membrane-spanning segment. Over 400–418 (AGLWLLLPKRKTPENGITT) the chain is Cytoplasmic.

The protein belongs to the amino acid-polyamine-organocation (APC) superfamily. Amino acid efflux (AAE) (TC 2.A.3.13) family.

The protein localises to the cell inner membrane. The catalysed reaction is L-methionine(in) + H(+)(out) = L-methionine(out) + H(+)(in). It catalyses the reaction L-leucine(in) + H(+)(out) = L-leucine(out) + H(+)(in). The enzyme catalyses L-isoleucine(in) + H(+)(out) = L-isoleucine(out) + H(+)(in). It carries out the reaction L-valine(in) + H(+)(out) = L-valine(out) + H(+)(in). Efflux of L-methionine is inhibited by the proton ionophore carbonyl cyanide m-chlorophenylhydrazone (CCCP). Its function is as follows. Catalyzes the efflux of L-methionine, L-leucine, L-isoleucine and L-valine. Activity is dependent on electrochemical potential. The sequence is that of L-methionine/branched-chain amino acid exporter YjeH (yjeH) from Escherichia coli (strain K12).